The chain runs to 359 residues: Acyl-CoA desaturase (359 aa).

Topologically, residues 1–72 (MPAHLLQEEI…EGPKPKLEYV (72 aa)) are cytoplasmic. A helical membrane pass occupies residues 73 to 93 (WRNIILMGLLHLGALYGITLI). N75 lines the substrate pocket. Residues 94-97 (PTCK) lie on the Lumenal side of the membrane. The chain crosses the membrane as a helical span at residues 98-118 (IYTFLWVLFYYVISALGITAG). Over 119–217 (VHRLWSHRTY…EKLVMFQRRY (99 aa)) the chain is Cytoplasmic. Residues H120 and H125 each coordinate Fe cation. The Histidine box-1 signature appears at 120–125 (HRLWSH). Residues N148, R155, and D156 each coordinate substrate. H157, H160, and H161 together coordinate Fe cation. The Histidine box-2 motif lies at 157 to 161 (HRAHH). Positions 188 and 189 each coordinate substrate. Residue S203 is modified to Phosphoserine. Residues 218 to 237 (YKPGVLLLCFILPTLVPWYL) traverse the membrane as a helical segment. Over 238–241 (WGES) the chain is Lumenal. A helical membrane pass occupies residues 242 to 263 (FQNSLFFATFLRYAVVLNATWL). W262 contributes to the substrate binding site. Over 264-359 (VNSAAHMYGY…RTGEESYKSG (96 aa)) the chain is Cytoplasmic. Residues H269, H298, H301, and H302 each coordinate Fe cation. Positions 298 to 302 (HNYHH) match the Histidine box-3 motif.

Belongs to the fatty acid desaturase type 1 family. The cofactor is Fe(2+).

It localises to the endoplasmic reticulum membrane. It carries out the reaction octadecanoyl-CoA + 2 Fe(II)-[cytochrome b5] + O2 + 2 H(+) = (9Z)-octadecenoyl-CoA + 2 Fe(III)-[cytochrome b5] + 2 H2O. Its function is as follows. Stearoyl-CoA desaturase that utilizes O(2) and electrons from reduced cytochrome b5 to introduce the first double bond into saturated fatty acyl-CoA substrates. Catalyzes the insertion of a cis double bond at the delta-9 position into fatty acyl-CoA substrates including palmitoyl-CoA and stearoyl-CoA. Gives rise to a mixture of 16:1 and 18:1 unsaturated fatty acids. Plays an important role in lipid biosynthesis. Plays an important role in regulating the expression of genes that are involved in lipogenesis and in regulating mitochondrial fatty acid oxidation. Plays an important role in body energy homeostasis. Contributes to the biosynthesis of membrane phospholipids, cholesterol esters and triglycerides. This Ovis aries (Sheep) protein is Acyl-CoA desaturase (SCD).